The following is an 87-amino-acid chain: RNA-binding protein Hfq (87 aa).

The region spanning 9–68 is the Sm domain; the sequence is DPYLNVLRKERIPVSIYLVNGIKLQGQVESFDQFVVLLKNTVSQMVYKHAISTVVPSRPV.

The protein belongs to the Hfq family. In terms of assembly, homohexamer.

In terms of biological role, RNA chaperone that binds small regulatory RNA (sRNAs) and mRNAs to facilitate mRNA translational regulation in response to envelope stress, environmental stress and changes in metabolite concentrations. Also binds with high specificity to tRNAs. This is RNA-binding protein Hfq from Teredinibacter turnerae (strain ATCC 39867 / T7901).